The sequence spans 147 residues: Hemoglobin subunit gamma-2 (147 aa).

Residues histidine 3–histidine 147 form the Globin domain. Position 13 is a phosphothreonine (threonine 13). A phosphoserine mark is found at serine 45, serine 51, and serine 53. Lysine 60 is subject to N6-acetyllysine. Histidine 64 provides a ligand contact to heme b. The residue at position 83 (lysine 83) is an N6-acetyllysine. Residue histidine 93 participates in heme b binding. Residue cysteine 94 is modified to S-nitrosocysteine. Phosphoserine is present on residues serine 140, serine 143, and serine 144.

This sequence belongs to the globin family. Heterotetramer of two alpha chains and two gamma chains in fetal hemoglobin (Hb F). In terms of tissue distribution, red blood cells.

In terms of biological role, gamma chains make up the fetal hemoglobin F, in combination with alpha chains. The sequence is that of Hemoglobin subunit gamma-2 (HBG2) from Gorilla gorilla gorilla (Western lowland gorilla).